The primary structure comprises 192 residues: Elongation factor P (192 aa).

This sequence belongs to the elongation factor P family.

The protein resides in the cytoplasm. Its pathway is protein biosynthesis; polypeptide chain elongation. Involved in peptide bond synthesis. Stimulates efficient translation and peptide-bond synthesis on native or reconstituted 70S ribosomes in vitro. Probably functions indirectly by altering the affinity of the ribosome for aminoacyl-tRNA, thus increasing their reactivity as acceptors for peptidyl transferase. The chain is Elongation factor P (efp) from Aquifex aeolicus (strain VF5).